Here is an 859-residue protein sequence, read N- to C-terminus: MVSIAFYGGIPGGISTPITQQSEKSKCEENTMFQPYCYNNDSKNSMAESKEARDQEMNLKEESKEEKRRNDWWKIGMFLLCLAGTTGGILWWYEGLPQQHYIGLVAIGGRLNGSGQSNAIECWGSFPGCRPFQNYFSYETNRSIHMNNNTATLLEAYHREITFIYKSSCTDSDHCQEYQCKKVNLNSSDSSNSVRVEDVTNTAEYWGFKWLECNQTENFKTILVPENEMVNINDTDTWIPKGCNETWARVKRCPIDILYGIHPIRLCVQPPFFLVQEKGIADTSRIGNCGPTIFLGVLEDNKGVVRGDYTACNVRRLNINRKDYTGMYQVPIFYTCTFTNITSCNSEPIISVIMYETNQVQYLLCNNNNSNNYNCVVQSFGVIGQAHLELPRPNKRIRNQSFNQYNCSINNKTELETWKLVNTSGITPLPISSEANTGLIRHKRDFGISAIVAAIVAATAIARSATMSYVALTEVNKIMEVQNHTFEVENSTLNGMDLIERQIKILYAMILQTHADVQLLKERQQVEETFNLIGCIERTHVFCHTGHPWNMSWGHLNESTQWDDWVSKMEDLNQEILTTLHGARNNLAQSMITFNTPDSIAQFGKDLWSHIGNWIPGLGASIIKYIVMFLLIYLLLTSSPKILRALWKVTSGAGSSGGRYLKKKFHHKHASREDTWDQAQHNIHLAGVTGGSGDKYYKQKYSRNDWNGESEEYNRRPKSWVKSIEAFGESYISEKTKGEISQPGAAINEHKNGSGGNNPHQGSLDLEIRSEGGNIYDCCIKAQEGTLAIPCCGFPLWLFWGLVIIVGRIAGYGLRGLAVIIRICIRGLNLIFEIIRKMLDYIGRALNPGTSHVSMPQYV.

Positions 1–6 (MVSIAF) are excised as a propeptide. The Extracellular segment spans residues 7–614 (YGGIPGGIST…KDLWSHIGNW (608 aa)). N-linked (GlcNAc...) asparagine; by host glycosylation is found at Asn-40, Asn-112, Asn-141, Asn-148, Asn-186, Asn-214, Asn-233, Asn-244, Asn-340, Asn-368, Asn-399, Asn-406, Asn-411, and Asn-422. The interval 446–466 (FGISAIVAAIVAATAIARSAT) is fusion peptide. Residues Asn-483 and Asn-490 are each glycosylated (N-linked (GlcNAc...) asparagine; by host). Positions 498–513 (LIERQIKILYAMILQT) are immunosuppression. Residues Asn-550 and Asn-557 are each glycosylated (N-linked (GlcNAc...) asparagine; by host). 2 coiled-coil regions span residues 576–624 (ILTT…SIIK) and 663–699 (KKFHHKHASREDTWDQAQHNIHLAGVTGGSGDKYYKQ). Residues 615–635 (IPGLGASIIKYIVMFLLIYLL) form a helical membrane-spanning segment. Residues 636–859 (LTSSPKILRA…TSHVSMPQYV (224 aa)) are Cytoplasmic-facing.

As to quaternary structure, the mature envelope protein (Env) consists of a trimer of SU-TM heterodimers attached by noncovalent interactions or by a labile interchain disulfide bond. In terms of processing, specific enzymatic cleavages in vivo yield mature proteins. Envelope glycoproteins are synthesized as an inactive precursor that is N-glycosylated and processed likely by host cell furin or by a furin-like protease in the Golgi to yield the mature SU and TM proteins. The cleavage site between SU and TM requires the minimal sequence [KR]-X-[KR]-R.

It is found in the virion membrane. Its subcellular location is the host cell membrane. In terms of biological role, the surface protein (SU) attaches the virus to the host cell by binding to its receptor. This interaction triggers the refolding of the transmembrane protein (TM) and is thought to activate its fusogenic potential by unmasking its fusion peptide. Fusion occurs at the host cell plasma membrane. Functionally, the transmembrane protein (TM) acts as a class I viral fusion protein. Under the current model, the protein has at least 3 conformational states: pre-fusion native state, pre-hairpin intermediate state, and post-fusion hairpin state. During viral and target cell membrane fusion, the coiled coil regions (heptad repeats) assume a trimer-of-hairpins structure, positioning the fusion peptide in close proximity to the C-terminal region of the ectodomain. The formation of this structure appears to drive apposition and subsequent fusion of viral and target cell membranes. Membranes fusion leads to delivery of the nucleocapsid into the cytoplasm. The chain is Envelope glycoprotein (env) from Equus asinus (Donkey).